A 391-amino-acid chain; its full sequence is Elongation factor Tu (391 aa).

Residues 10–201 enclose the tr-type G domain; the sequence is KPHVNIGTIG…AVDEYIPTPA (192 aa). A G1 region spans residues 19 to 26; the sequence is GHVDHGKT. 19-26 lines the GTP pocket; sequence GHVDHGKT. Thr26 provides a ligand contact to Mg(2+). Residues 55–59 are G2; that stretch reads GITIS. The interval 76-79 is G3; the sequence is DCPG. GTP contacts are provided by residues 76–80 and 131–134; these read DCPGH and NKVD. Residues 131 to 134 are G4; it reads NKVD. The interval 169-171 is G5; sequence SAL.

This sequence belongs to the TRAFAC class translation factor GTPase superfamily. Classic translation factor GTPase family. EF-Tu/EF-1A subfamily. Monomer.

The protein resides in the cytoplasm. It carries out the reaction GTP + H2O = GDP + phosphate + H(+). Its function is as follows. GTP hydrolase that promotes the GTP-dependent binding of aminoacyl-tRNA to the A-site of ribosomes during protein biosynthesis. The protein is Elongation factor Tu of Cereibacter sphaeroides (strain ATCC 17025 / ATH 2.4.3) (Rhodobacter sphaeroides).